The following is a 402-amino-acid chain: Speedy protein E21 (402 aa).

Residues M1 to P90 form a disordered region. Residues G16–Y39 are compositionally biased toward polar residues. The span at D76 to P90 shows a compositional bias: acidic residues.

It belongs to the Speedy/Ringo family.

The polypeptide is Speedy protein E21 (Homo sapiens (Human)).